Consider the following 205-residue polypeptide: Ribonuclease HII (205 aa).

One can recognise an RNase H type-2 domain in the interval 14–201 (EIVAGVDEAG…KGNINHSAIL (188 aa)). D20, E21, and D111 together coordinate a divalent metal cation.

The protein belongs to the RNase HII family. Mn(2+) is required as a cofactor. The cofactor is Mg(2+).

Its subcellular location is the cytoplasm. It catalyses the reaction Endonucleolytic cleavage to 5'-phosphomonoester.. In terms of biological role, endonuclease that specifically degrades the RNA of RNA-DNA hybrids. The polypeptide is Ribonuclease HII (Orientia tsutsugamushi (strain Boryong) (Rickettsia tsutsugamushi)).